We begin with the raw amino-acid sequence, 195 residues long: Imidazoleglycerol-phosphate dehydratase (195 aa).

It belongs to the imidazoleglycerol-phosphate dehydratase family.

The protein localises to the cytoplasm. The catalysed reaction is D-erythro-1-(imidazol-4-yl)glycerol 3-phosphate = 3-(imidazol-4-yl)-2-oxopropyl phosphate + H2O. It participates in amino-acid biosynthesis; L-histidine biosynthesis; L-histidine from 5-phospho-alpha-D-ribose 1-diphosphate: step 6/9. This chain is Imidazoleglycerol-phosphate dehydratase, found in Koribacter versatilis (strain Ellin345).